A 200-amino-acid chain; its full sequence is Cytochrome c biogenesis ATP-binding export protein CcmA (200 aa).

Positions 1-199 constitute an ABC transporter domain; the sequence is MRLTGRGLRC…AARELRIGGA (199 aa). 35–42 provides a ligand contact to ATP; the sequence is GANGAGKT.

Belongs to the ABC transporter superfamily. CcmA exporter (TC 3.A.1.107) family. In terms of assembly, the complex is composed of two ATP-binding proteins (CcmA) and two transmembrane proteins (CcmB).

The protein localises to the cell inner membrane. It carries out the reaction heme b(in) + ATP + H2O = heme b(out) + ADP + phosphate + H(+). Part of the ABC transporter complex CcmAB involved in the biogenesis of c-type cytochromes; once thought to export heme, this seems not to be the case, but its exact role is uncertain. Responsible for energy coupling to the transport system. The sequence is that of Cytochrome c biogenesis ATP-binding export protein CcmA from Rhodopseudomonas palustris (strain BisB18).